The following is a 290-amino-acid chain: Endo-1,4-beta-xylanase B (290 aa).

The signal sequence occupies residues 1-19 (MVSFNSLLVAVSAATCALA). The N-linked (GlcNAc...) asparagine glycan is linked to asparagine 26. The GH11 domain maps to 34–222 (QSTPAGTGTN…SSGSSTVTVN (189 aa)). Glutamate 118 (nucleophile) is an active-site residue. Glutamate 209 serves as the catalytic Proton donor. The tract at residues 223 to 248 (PAGGVTSPIAPTGPSSVSTTPSGPSS) is disordered. The span at 234-248 (TGPSSVSTTPSGPSS) shows a compositional bias: low complexity. Positions 255–290 (TCSALYGQCGGQGWTGPTCCSSGTCKFSNNWYSQCL) constitute a CBM1 domain.

The protein belongs to the glycosyl hydrolase 11 (cellulase G) family.

The protein localises to the secreted. The catalysed reaction is Endohydrolysis of (1-&gt;4)-beta-D-xylosidic linkages in xylans.. Its pathway is glycan degradation; xylan degradation. Functionally, endo-1,4-beta-xylanase involved in the hydrolysis of xylan, a major structural heterogeneous polysaccharide found in plant biomass representing the second most abundant polysaccharide in the biosphere, after cellulose. This Phanerodontia chrysosporium (White-rot fungus) protein is Endo-1,4-beta-xylanase B (xynB).